The primary structure comprises 529 residues: Glucose-6-phosphate isomerase (529 aa).

Glu-323 (proton donor) is an active-site residue. Catalysis depends on residues His-352 and Lys-456.

It belongs to the GPI family.

It localises to the cytoplasm. The enzyme catalyses alpha-D-glucose 6-phosphate = beta-D-fructose 6-phosphate. The protein operates within carbohydrate biosynthesis; gluconeogenesis. It participates in carbohydrate degradation; glycolysis; D-glyceraldehyde 3-phosphate and glycerone phosphate from D-glucose: step 2/4. Catalyzes the reversible isomerization of glucose-6-phosphate to fructose-6-phosphate. The polypeptide is Glucose-6-phosphate isomerase (Geobacter sulfurreducens (strain ATCC 51573 / DSM 12127 / PCA)).